Here is a 428-residue protein sequence, read N- to C-terminus: Adenylosuccinate synthetase (428 aa).

Residues 11–17 (GDEGKGK) and 39–41 (GHT) each bind GTP. Asp-12 serves as the catalytic Proton acceptor. 2 residues coordinate Mg(2+): Asp-12 and Gly-39. Residues 12-15 (DEGK), 37-40 (NAGH), Thr-130, Arg-144, Asn-226, Thr-241, and Arg-305 each bind IMP. His-40 functions as the Proton donor in the catalytic mechanism. 301 to 307 (VTTGRKR) contacts substrate. GTP-binding positions include Arg-307, 333-335 (KLD), and 415-417 (GTG).

This sequence belongs to the adenylosuccinate synthetase family. As to quaternary structure, homodimer. Mg(2+) serves as cofactor.

The protein localises to the cytoplasm. The catalysed reaction is IMP + L-aspartate + GTP = N(6)-(1,2-dicarboxyethyl)-AMP + GDP + phosphate + 2 H(+). The protein operates within purine metabolism; AMP biosynthesis via de novo pathway; AMP from IMP: step 1/2. Functionally, plays an important role in the de novo pathway and in the salvage pathway of purine nucleotide biosynthesis. Catalyzes the first committed step in the biosynthesis of AMP from IMP. This chain is Adenylosuccinate synthetase, found in Candida albicans (strain SC5314 / ATCC MYA-2876) (Yeast).